Consider the following 366-residue polypeptide: Cobalt-precorrin-5B C(1)-methyltransferase (366 aa).

This sequence belongs to the CbiD family.

The enzyme catalyses Co-precorrin-5B + S-adenosyl-L-methionine = Co-precorrin-6A + S-adenosyl-L-homocysteine. The protein operates within cofactor biosynthesis; adenosylcobalamin biosynthesis; cob(II)yrinate a,c-diamide from sirohydrochlorin (anaerobic route): step 6/10. In terms of biological role, catalyzes the methylation of C-1 in cobalt-precorrin-5B to form cobalt-precorrin-6A. The sequence is that of Cobalt-precorrin-5B C(1)-methyltransferase from Pseudomonas aeruginosa (strain LESB58).